The following is a 562-amino-acid chain: Isochorismate synthase 2, chloroplastic (562 aa).

Residues 1-55 (MASLQCSFHFLGTNPKKYNPSSIFQSYSRTSFTKLSSRVSRQRFLRCTLSMNGCE) constitute a chloroplast transit peptide.

This sequence belongs to the isochorismate synthase family. It depends on Mg(2+) as a cofactor.

The protein localises to the plastid. It is found in the chloroplast. It catalyses the reaction chorismate = isochorismate. Its pathway is siderophore biosynthesis; salicylate biosynthesis. Its function is as follows. Isochorismate synthase involved in the synthesis of salicylic acid (SA) required for both local and systemic acquired resistance (LAR and SAR) while SA synthesized through the phenylalanine ammonium lyase (PAL) pathway seems to potentiate plant cell death. Also involved in phylloquinone (vitamin K1) synthesis. Has no isochorismate pyruvate lyase (IPL) activity. The sequence is that of Isochorismate synthase 2, chloroplastic (ICS2) from Arabidopsis thaliana (Mouse-ear cress).